We begin with the raw amino-acid sequence, 591 residues long: NADH-quinone oxidoreductase subunit C/D (591 aa).

Residues 1–182 (MVTVVENIDP…TPYFLNTAKQ (182 aa)) form an NADH dehydrogenase I subunit C region. The tract at residues 206 to 591 (DFMFLNIGPN…IDVVMADCDR (386 aa)) is NADH dehydrogenase I subunit D.

It in the N-terminal section; belongs to the complex I 30 kDa subunit family. This sequence in the C-terminal section; belongs to the complex I 49 kDa subunit family. NDH-1 is composed of 13 different subunits. Subunits NuoB, CD, E, F, and G constitute the peripheral sector of the complex.

The protein resides in the cell inner membrane. It carries out the reaction a quinone + NADH + 5 H(+)(in) = a quinol + NAD(+) + 4 H(+)(out). In terms of biological role, NDH-1 shuttles electrons from NADH, via FMN and iron-sulfur (Fe-S) centers, to quinones in the respiratory chain. The immediate electron acceptor for the enzyme in this species is believed to be ubiquinone. Couples the redox reaction to proton translocation (for every two electrons transferred, four hydrogen ions are translocated across the cytoplasmic membrane), and thus conserves the redox energy in a proton gradient. This Psychrobacter arcticus (strain DSM 17307 / VKM B-2377 / 273-4) protein is NADH-quinone oxidoreductase subunit C/D.